A 444-amino-acid chain; its full sequence is 4-O-dimethylallyl-L-tyrosine synthase (444 aa).

It belongs to the tryptophan dimethylallyltransferase family. As to quaternary structure, homodimer.

It catalyses the reaction L-tyrosine + dimethylallyl diphosphate = 4-O-dimethylallyl-L-tyrosine + diphosphate. In terms of biological role, 4-O-dimethylallyl-L-tyrosine synthase; part of the gene cluster that mediates the biosynthesis of an unusual class of epipolythiodioxopiperazines (ETPs) lacking the reactive thiol group important for toxicity. Firstly, L-tyrosine is prenylated by tcpD, before undergoing condensation with L-glycine in a reaction catalyzed by the NRPS tcpP leading to the diketopiperazine (DKP) backbone. Afterwards the alpha-carbon of tyrosine is oxidized by the cytochrome P450 tcpC to form a hydroxyl group. However, in contrast other ETP biosynthesis pathways studied so far, tcpC is not able to bishydroxylate the DKP at both alpha-carbon positions, but hydroxylates the alpha-carbon of the tyrosine part and the nitrogen of the glycine part. The next steps involve an alpha,beta-elimination reaction catalyzed by tcpI, a methylation by the methyltransferase tcpN the action of the four enzyme cascade tcpG/K/J/I. Due to a dysfunctional cytochrome P450 monooxygenase tcpC, the pathway leads to the biosynthesis of probable non-toxic metabolites lacking the reactive thiol group. The chain is 4-O-dimethylallyl-L-tyrosine synthase from Claviceps purpurea (strain 20.1) (Ergot fungus).